The following is a 306-amino-acid chain: Curved DNA-binding protein (306 aa).

The region spanning 5–69 (DYYAIMGVKP…QRRAEYDQMW (65 aa)) is the J domain.

The protein localises to the cytoplasm. It is found in the nucleoid. DNA-binding protein that preferentially recognizes a curved DNA sequence. It is probably a functional analog of DnaJ; displays overlapping activities with DnaJ, but functions under different conditions, probably acting as a molecular chaperone in an adaptive response to environmental stresses other than heat shock. Lacks autonomous chaperone activity; binds native substrates and targets them for recognition by DnaK. Its activity is inhibited by the binding of CbpM. The polypeptide is Curved DNA-binding protein (Escherichia coli (strain SMS-3-5 / SECEC)).